The sequence spans 195 residues: Large ribosomal subunit protein uL5 (195 aa).

This sequence belongs to the universal ribosomal protein uL5 family. In terms of assembly, part of the 50S ribosomal subunit; part of the 5S rRNA/L5/L18/L25 subcomplex. Contacts the 5S rRNA and the P site tRNA. Forms a bridge to the 30S subunit in the 70S ribosome.

Functionally, this is one of the proteins that bind and probably mediate the attachment of the 5S RNA into the large ribosomal subunit, where it forms part of the central protuberance. In the 70S ribosome it contacts protein S13 of the 30S subunit (bridge B1b), connecting the 2 subunits; this bridge is implicated in subunit movement. Contacts the P site tRNA; the 5S rRNA and some of its associated proteins might help stabilize positioning of ribosome-bound tRNAs. The sequence is that of Large ribosomal subunit protein uL5 from Chlorobium chlorochromatii (strain CaD3).